Reading from the N-terminus, the 326-residue chain is tRNA-modifying protein YgfZ (326 aa).

Folate is bound by residues tryptophan 27 and tryptophan 189.

It belongs to the tRNA-modifying YgfZ family.

Its subcellular location is the cytoplasm. Its function is as follows. Folate-binding protein involved in regulating the level of ATP-DnaA and in the modification of some tRNAs. It is probably a key factor in regulatory networks that act via tRNA modification, such as initiation of chromosomal replication. This is tRNA-modifying protein YgfZ from Escherichia coli O6:H1 (strain CFT073 / ATCC 700928 / UPEC).